An 81-amino-acid chain; its full sequence is Cytochrome c oxidase subunit 7A1, mitochondrial (81 aa).

A mitochondrion-targeting transit peptide spans 1 to 21 (MRHLLGLPQLASRAFSTTVRQ). A helical membrane pass occupies residues 51-72 (ILYRLTMTLTVVGTGYSLYWLL).

Belongs to the cytochrome c oxidase VIIa family. In terms of assembly, component of the complex IV (CIV, cytochrome c oxidase). The complex exists as a monomer or a dimer and forms supercomplexes (SCs) in the inner mitochondrial membrane with NADH-ubiquinone oxidoreductase (complex I, CI) and ubiquinol-cytochrome c oxidoreductase (cytochrome b-c1 complex, complex III, CIII), resulting in different assemblies (supercomplex SCI(1)III(2)IV(1) and megacomplex MCI(2)III(2)IV(2)).

The protein localises to the mitochondrion inner membrane. Its pathway is energy metabolism; oxidative phosphorylation. Functionally, component of the mitochondrial respiratory complex IV (CIV, also named cytochrome c oxidase complex), the last enzyme in the mitochondrial electron transport chain which drives oxidative phosphorylation. The CIV complex is the component of the respiratory chain that catalyzes the reduction of oxygen to water. Acts as an assembly factor that specifically drives the homodimerization of CIV complexes, mediating the formation of mitochondrial respiratory supercomplexes (respirasomes) containing two CIV: supercomplxes with two molecules of CIV show improved activity. This chain is Cytochrome c oxidase subunit 7A1, mitochondrial, found in Danio rerio (Zebrafish).